We begin with the raw amino-acid sequence, 323 residues long: Acetyl esterase (323 aa).

Positions 91 to 93 (HGG) match the Involved in the stabilization of the negatively charged intermediate by the formation of the oxyanion hole motif. Catalysis depends on residues serine 165, aspartate 262, and histidine 292.

The protein belongs to the 'GDXG' lipolytic enzyme family. Homodimer. Interacts with MalT and MelA.

The protein localises to the cytoplasm. Displays esterase activity towards short chain fatty esters (acyl chain length of up to 8 carbons). Able to hydrolyze triacetylglycerol (triacetin) and tributyrylglycerol (tributyrin), but not trioleylglycerol (triolein) or cholesterol oleate. Negatively regulates MalT activity by antagonizing maltotriose binding. Inhibits MelA galactosidase activity. The sequence is that of Acetyl esterase from Salmonella paratyphi A (strain AKU_12601).